The chain runs to 399 residues: Ubiquitin-like modifier-activating enzyme 5 (399 aa).

The ATP site is built by Gly-76, Asp-97, Lys-120, Asn-143, and Asn-177. The Zn(2+) site is built by Cys-219 and Cys-222. Catalysis depends on Cys-243, which acts as the Glycyl thioester intermediate. The Zn(2+) site is built by Cys-296 and Cys-301.

This sequence belongs to the ubiquitin-activating E1 family. UBA5 subfamily.

In terms of biological role, E1-like enzyme which activates UFM1. The sequence is that of Ubiquitin-like modifier-activating enzyme 5 from Drosophila mojavensis (Fruit fly).